Reading from the N-terminus, the 78-residue chain is Protein SlyX homolog (78 aa).

Belongs to the SlyX family.

This chain is Protein SlyX homolog, found in Xanthomonas euvesicatoria pv. vesicatoria (strain 85-10) (Xanthomonas campestris pv. vesicatoria).